Here is a 359-residue protein sequence, read N- to C-terminus: Fructose-bisphosphate aldolase (359 aa).

Ser-50 is a D-glyceraldehyde 3-phosphate binding site. Residue Asp-83 is the Proton donor of the active site. Positions 84, 105, 142, and 198 each coordinate Zn(2+). Gly-199 contributes to the dihydroxyacetone phosphate binding site. A Zn(2+)-binding site is contributed by His-232. Dihydroxyacetone phosphate contacts are provided by residues 233–235 (GSS) and 275–278 (NIDT).

This sequence belongs to the class II fructose-bisphosphate aldolase family. Homodimer. It depends on Zn(2+) as a cofactor.

It catalyses the reaction beta-D-fructose 1,6-bisphosphate = D-glyceraldehyde 3-phosphate + dihydroxyacetone phosphate. Its pathway is carbohydrate biosynthesis; Calvin cycle. The protein operates within carbohydrate degradation; glycolysis; D-glyceraldehyde 3-phosphate and glycerone phosphate from D-glucose: step 4/4. Its function is as follows. Catalyzes the aldol condensation of dihydroxyacetone phosphate (DHAP or glycerone-phosphate) with glyceraldehyde 3-phosphate (G3P) to form fructose 1,6-bisphosphate (FBP) in gluconeogenesis and the reverse reaction in glycolysis. The polypeptide is Fructose-bisphosphate aldolase (cbbA) (Sinorhizobium medicae (strain WSM419) (Ensifer medicae)).